The sequence spans 619 residues: Type VI secretion system component TssF1 (619 aa).

Interacts with TssA1.

In terms of biological role, core component of the H1 type VI (H1-T6SS) secretion system that plays a role in the release of toxins targeting both eukaryotic and prokaryotic species. This is Type VI secretion system component TssF1 from Pseudomonas aeruginosa (strain ATCC 15692 / DSM 22644 / CIP 104116 / JCM 14847 / LMG 12228 / 1C / PRS 101 / PAO1).